Here is a 476-residue protein sequence, read N- to C-terminus: Beta-xylosidase (476 aa).

The active-site Proton donor is Glu-188. The Nucleophile role is filled by Glu-292. N-linked (GlcNAc...) asparagine glycosylation occurs at Asn-468.

Belongs to the glycosyl hydrolase 5 (cellulase A) family.

Its subcellular location is the secreted. It carries out the reaction Hydrolysis of (1-&gt;4)-beta-D-xylans, to remove successive D-xylose residues from the non-reducing termini.. Its function is as follows. Catalyzes the hydrolysis of xylo-oligomers to xylose units and plays an important role in xylan degradation. Can also perform the transglycosylation of xylose and alcohol. Has no endoglucanase activity. The sequence is that of Beta-xylosidase from Phanerodontia chrysosporium (White-rot fungus).